The chain runs to 332 residues: RING finger protein 225 (332 aa).

Positions 1–55 (MPCPRLPWLRRHRTSQGSGPSSPSTVSAPNSPSRGEDEDAEEEEGDGTPGSGPIL) are disordered. Residues 15–27 (SQGSGPSSPSTVS) are compositionally biased toward low complexity. Residues 36 to 46 (EDEDAEEEEGD) show a composition bias toward acidic residues. Residues 63 to 111 (CLICVSPFDGIFKLPKRLDCGHVFCLECLARLSLATAGGGDAVACPMCR) form an RING-type zinc finger. The disordered stretch occupies residues 121 to 187 (GLPALPTQPG…PPPLRLGRPL (67 aa)). A helical transmembrane segment spans residues 205-225 (ALAVLVAAGLVVSGVYIFFLI). Residues 259–332 (THAWTRRPTK…ADGKKVQLQQ (74 aa)) form a disordered region. Basic and acidic residues-rich tracts occupy residues 280–295 (ATKD…KDPV) and 323–332 (ADGKKVQLQQ).

The protein resides in the membrane. This is RING finger protein 225 from Mus musculus (Mouse).